Consider the following 218-residue polypeptide: MDKSGSPNASRTSRRRRPRRGSRSASGADAGLRALTQQMLKLNKTLAIGRPTLNHPTFVGSESCKPGYTFTSITLKPPEIEKGSYFGRRLSLPDSVTDYDKKLVSRIQIRINPLPKFDSTVWVTVRKVPSSSDLSVAAISAMFGDGNSPVLVYQYAASGVQANNKLLYDLSEMRADIGDMRKYAVLVYSKDDNLEKDEIVLHVDVEHQRIPISRMLPT.

The residue at position 1 (M1) is an N-acetylmethionine; by host. The disordered stretch occupies residues 1-30; that stretch reads MDKSGSPNASRTSRRRRPRRGSRSASGADA. Residues 12 to 22 are compositionally biased toward basic residues; sequence TSRRRRPRRGS.

It belongs to the cucumovirus capsid protein family.

It is found in the virion. Functionally, capsid protein. Probably binds RNA and plays a role in packaging. In Cucumis sativus (Cucumber), this protein is Capsid protein.